A 68-amino-acid chain; its full sequence is Alpha-conotoxin-like Mr1.2 (68 aa).

Positions 1-21 (MGMRMMFTVFLLVVLATTVVS) are cleaved as a signal peptide. Residues 22 to 48 (FTSDRGSDGRNAAAKDKASDLVALTVK) constitute a propeptide that is removed on maturation. Cystine bridges form between C50–C56 and C51–C64. The ser-Xaa-Pro motif, crucial for potent interaction with nAChR stretch occupies residues 52 to 54 (SNP). Asparagine amide is present on N65.

It belongs to the conotoxin A superfamily. As to expression, expressed by the venom duct.

The protein localises to the secreted. Functionally, alpha-conotoxins act on postsynaptic membranes, they bind to the nicotinic acetylcholine receptors (nAChR) and thus inhibit them. The protein is Alpha-conotoxin-like Mr1.2 of Conus marmoreus (Marble cone).